The chain runs to 689 residues: Glycine--tRNA ligase beta subunit (689 aa).

This sequence belongs to the class-II aminoacyl-tRNA synthetase family. As to quaternary structure, tetramer of two alpha and two beta subunits.

It localises to the cytoplasm. It carries out the reaction tRNA(Gly) + glycine + ATP = glycyl-tRNA(Gly) + AMP + diphosphate. This Erwinia tasmaniensis (strain DSM 17950 / CFBP 7177 / CIP 109463 / NCPPB 4357 / Et1/99) protein is Glycine--tRNA ligase beta subunit.